The primary structure comprises 299 residues: UDP-N-acetylenolpyruvoylglucosamine reductase (299 aa).

The FAD-binding PCMH-type domain maps to 21–189; sequence RVGGPAQWLL…LSARFRLEPG (169 aa). Arg168 is an active-site residue. Ser219 functions as the Proton donor in the catalytic mechanism. Glu289 is a catalytic residue.

Belongs to the MurB family. FAD serves as cofactor.

It is found in the cytoplasm. It catalyses the reaction UDP-N-acetyl-alpha-D-muramate + NADP(+) = UDP-N-acetyl-3-O-(1-carboxyvinyl)-alpha-D-glucosamine + NADPH + H(+). It participates in cell wall biogenesis; peptidoglycan biosynthesis. In terms of biological role, cell wall formation. The polypeptide is UDP-N-acetylenolpyruvoylglucosamine reductase (Parasynechococcus marenigrum (strain WH8102)).